A 147-amino-acid chain; its full sequence is Large ribosomal subunit protein bL9 (147 aa).

Residues 40–60 (TTGNLKQHEAHERKAAEEAKQ) form a disordered region. The segment covering 45 to 59 (KQHEAHERKAAEEAK) has biased composition (basic and acidic residues).

Belongs to the bacterial ribosomal protein bL9 family.

Functionally, binds to the 23S rRNA. The chain is Large ribosomal subunit protein bL9 from Exiguobacterium sibiricum (strain DSM 17290 / CCUG 55495 / CIP 109462 / JCM 13490 / 255-15).